The following is a 144-amino-acid chain: Large ribosomal subunit protein uL11 (144 aa).

This sequence belongs to the universal ribosomal protein uL11 family. Part of the ribosomal stalk of the 50S ribosomal subunit. Interacts with L10 and the large rRNA to form the base of the stalk. L10 forms an elongated spine to which L12 dimers bind in a sequential fashion forming a multimeric L10(L12)X complex. In terms of processing, one or more lysine residues are methylated.

In terms of biological role, forms part of the ribosomal stalk which helps the ribosome interact with GTP-bound translation factors. The chain is Large ribosomal subunit protein uL11 from Nocardia farcinica (strain IFM 10152).